We begin with the raw amino-acid sequence, 221 residues long: MAGKPVLHYFDGRGRMEPIRWLLAAAGVEFEEKFLKTRDDLARLRSDGSLMFQQVPMVEIDGMKLVQTKAILNYIASKYNLYGKDMKERAIIDMYTEGVADLEIMILYYPHMPPEEKEASLAKIKEQTRNRYFPAFEKVLKSHGQDYLVGNRLSRADIALVELLYHVEELDPGVVDNFPLLKALRSRVSNLPTVKKFLQPGSQRKPFDDAKCVESAKKIFS.

Alanine 2 bears the N-acetylalanine mark. In terms of domain architecture, GST N-terminal spans 3–83; sequence GKPVLHYFDG…YIASKYNLYG (81 aa). At lysine 4 the chain carries N6-succinyllysine. Residues tyrosine 9, arginine 45, 54-55, and 67-68 contribute to the glutathione site; these read QV and QT. The 123-residue stretch at 85-207 folds into the GST C-terminal domain; it reads DMKERAIIDM…LQPGSQRKPF (123 aa).

Homodimer.

The protein resides in the cytoplasm. It carries out the reaction RX + glutathione = an S-substituted glutathione + a halide anion + H(+). It catalyses the reaction androst-5-ene-3,17-dione = androst-4-ene-3,17-dione. The enzyme catalyses pregn-5-ene-3,20-dione = progesterone. Conjugation of reduced glutathione to a wide number of exogenous and endogenous hydrophobic electrophiles. Catalyzes isomerization reactions that contribute to the biosynthesis of steroid hormones. Efficiently catalyze obligatory double-bond isomerizations of delta(5)-androstene-3,17-dione and delta(5)-pregnene-3,20-dione, precursors to testosterone and progesterone, respectively. Has a high catalytic activity for aflatoxin B1-8,9 epoxide. The chain is Glutathione S-transferase A3 from Mus musculus (Mouse).